The following is an 830-amino-acid chain: Leucine--tRNA ligase (830 aa).

The 'HIGH' region signature appears at 34-44; the sequence is PYPSGNIHMGH. The 'KMSKS' region signature appears at 592–596; sequence KMSKS. K595 lines the ATP pocket.

Belongs to the class-I aminoacyl-tRNA synthetase family.

It localises to the cytoplasm. It catalyses the reaction tRNA(Leu) + L-leucine + ATP = L-leucyl-tRNA(Leu) + AMP + diphosphate. The polypeptide is Leucine--tRNA ligase (Ehrlichia ruminantium (strain Gardel)).